A 224-amino-acid polypeptide reads, in one-letter code: Imidazole glycerol phosphate synthase subunit HisH (224 aa).

One can recognise a Glutamine amidotransferase type-1 domain in the interval 5-214 (DTIIIDTGCA…MKMNAGSFAG (210 aa)). Catalysis depends on Cys-80, which acts as the Nucleophile. Active-site residues include His-189 and Glu-191.

In terms of assembly, heterodimer of HisH and HisF.

The protein localises to the cytoplasm. The catalysed reaction is 5-[(5-phospho-1-deoxy-D-ribulos-1-ylimino)methylamino]-1-(5-phospho-beta-D-ribosyl)imidazole-4-carboxamide + L-glutamine = D-erythro-1-(imidazol-4-yl)glycerol 3-phosphate + 5-amino-1-(5-phospho-beta-D-ribosyl)imidazole-4-carboxamide + L-glutamate + H(+). It catalyses the reaction L-glutamine + H2O = L-glutamate + NH4(+). It functions in the pathway amino-acid biosynthesis; L-histidine biosynthesis; L-histidine from 5-phospho-alpha-D-ribose 1-diphosphate: step 5/9. IGPS catalyzes the conversion of PRFAR and glutamine to IGP, AICAR and glutamate. The HisH subunit catalyzes the hydrolysis of glutamine to glutamate and ammonia as part of the synthesis of IGP and AICAR. The resulting ammonia molecule is channeled to the active site of HisF. The chain is Imidazole glycerol phosphate synthase subunit HisH from Shewanella loihica (strain ATCC BAA-1088 / PV-4).